The sequence spans 319 residues: ATP-dependent 6-phosphofructokinase (319 aa).

Residue G11 coordinates ATP. 21–25 (RAVVR) lines the ADP pocket. ATP contacts are provided by residues 72 to 73 (RC) and 102 to 105 (GDGS). Residue D103 coordinates Mg(2+). Residue 125–127 (TID) coordinates substrate. Catalysis depends on D127, which acts as the Proton acceptor. R154 is a binding site for ADP. Substrate contacts are provided by residues R162 and 169-171 (MGR). ADP-binding positions include 185 to 187 (GAE), R211, and 213 to 215 (KKH). Substrate-binding positions include E222, R243, and 249-252 (HIQR).

The protein belongs to the phosphofructokinase type A (PFKA) family. ATP-dependent PFK group I subfamily. Prokaryotic clade 'B1' sub-subfamily. In terms of assembly, homotetramer. Mg(2+) serves as cofactor.

It localises to the cytoplasm. It catalyses the reaction beta-D-fructose 6-phosphate + ATP = beta-D-fructose 1,6-bisphosphate + ADP + H(+). It functions in the pathway carbohydrate degradation; glycolysis; D-glyceraldehyde 3-phosphate and glycerone phosphate from D-glucose: step 3/4. With respect to regulation, allosterically activated by ADP and other diphosphonucleosides, and allosterically inhibited by phosphoenolpyruvate. Functionally, catalyzes the phosphorylation of D-fructose 6-phosphate to fructose 1,6-bisphosphate by ATP, the first committing step of glycolysis. The protein is ATP-dependent 6-phosphofructokinase of Bacillus licheniformis (strain ATCC 14580 / DSM 13 / JCM 2505 / CCUG 7422 / NBRC 12200 / NCIMB 9375 / NCTC 10341 / NRRL NRS-1264 / Gibson 46).